The sequence spans 211 residues: ATP phosphoribosyltransferase (211 aa).

Belongs to the ATP phosphoribosyltransferase family. Short subfamily. As to quaternary structure, heteromultimer composed of HisG and HisZ subunits.

The protein resides in the cytoplasm. The catalysed reaction is 1-(5-phospho-beta-D-ribosyl)-ATP + diphosphate = 5-phospho-alpha-D-ribose 1-diphosphate + ATP. It participates in amino-acid biosynthesis; L-histidine biosynthesis; L-histidine from 5-phospho-alpha-D-ribose 1-diphosphate: step 1/9. Functionally, catalyzes the condensation of ATP and 5-phosphoribose 1-diphosphate to form N'-(5'-phosphoribosyl)-ATP (PR-ATP). Has a crucial role in the pathway because the rate of histidine biosynthesis seems to be controlled primarily by regulation of HisG enzymatic activity. The chain is ATP phosphoribosyltransferase from Pseudomonas fluorescens (strain ATCC BAA-477 / NRRL B-23932 / Pf-5).